Consider the following 1179-residue polypeptide: Tubulin glycylase 3B (1179 aa).

Residues 177 to 199 are compositionally biased toward polar residues; sequence NKGQTNNSNRENGGNFHSEQSPK. 4 disordered regions span residues 177-208, 250-278, 592-625, and 853-890; these read NKGQTNNSNRENGGNFHSEQSPKSAAGSVVSG, QQPQPLSQQHSNQSSQSSNPQSQSPLPLS, KVLSNTKSKDEEESSDDDETPVKSKSNNQNAVQQ, and QKQHMNKRKNSHRISVNHNHNDPIEEESAQSSTSLKQD. Residues 592–601 show a composition bias toward basic and acidic residues; that stretch reads KVLSNTKSKD. Composition is skewed to polar residues over residues 614–625 and 881–890; these read KSKSNNQNAVQQ and AQSSTSLKQD. The TTL domain occupies 790 to 1152; sequence FIDFYETVDF…SMAKKGTKKN (363 aa). Residues 965–968, lysine 978, and aspartate 980 contribute to the ATP site; that span reads QKYI.

The protein localises to the cell projection. It is found in the cilium. The protein resides in the cytoplasm. Its subcellular location is the cytoskeleton. It localises to the cilium axoneme. Functionally, polyglycylase which modifies tubulin, generating side chains of glycine on the gamma-carboxyl groups of specific glutamate residues within the C-terminal tail of tubulin. Polyglycylates tubulin, with a preference for alpha-tubulin toward beta-tubulin. The sequence is that of Tubulin glycylase 3B (TTLL3B) from Tetrahymena thermophila (strain SB210).